Reading from the N-terminus, the 632-residue chain is Probable potassium transport system protein Kup 2 (632 aa).

12 helical membrane passes run 19–39 (FWGL…TSPL), 58–78 (MIVL…VTAK), 110–130 (MFLM…SMIT), 147–167 (PALE…LFAV), 178–198 (AFGP…IVHI), 216–236 (FLLS…LAVT), 257–277 (WLFF…ALVL), 290–310 (MVPE…TVIA), 347–367 (IYLP…VLLF), 377–397 (YGIA…VVIW), 404–424 (AAVA…FFSA), and 429–449 (LFEG…TIWT).

It belongs to the HAK/KUP transporter (TC 2.A.72) family.

Its subcellular location is the cell inner membrane. The enzyme catalyses K(+)(in) + H(+)(in) = K(+)(out) + H(+)(out). Functionally, transport of potassium into the cell. Likely operates as a K(+):H(+) symporter. This Bradyrhizobium sp. (strain BTAi1 / ATCC BAA-1182) protein is Probable potassium transport system protein Kup 2.